The primary structure comprises 244 residues: 5-oxoprolinase subunit A (244 aa).

Belongs to the LamB/PxpA family. In terms of assembly, forms a complex composed of PxpA, PxpB and PxpC.

The enzyme catalyses 5-oxo-L-proline + ATP + 2 H2O = L-glutamate + ADP + phosphate + H(+). Catalyzes the cleavage of 5-oxoproline to form L-glutamate coupled to the hydrolysis of ATP to ADP and inorganic phosphate. In Salmonella agona (strain SL483), this protein is 5-oxoprolinase subunit A.